Here is a 379-residue protein sequence, read N- to C-terminus: Putative 8-amino-7-oxononanoate synthase (379 aa).

Arg-21 lines the substrate pocket. 97 to 98 (GY) contributes to the pyridoxal 5'-phosphate binding site. His-122 lines the substrate pocket. Pyridoxal 5'-phosphate-binding positions include Ser-169, 194–197 (DDAH), and 223–226 (TLSK). Lys-226 is subject to N6-(pyridoxal phosphate)lysine. Thr-340 is a binding site for substrate.

This sequence belongs to the class-II pyridoxal-phosphate-dependent aminotransferase family. BioF subfamily. Homodimer. It depends on pyridoxal 5'-phosphate as a cofactor.

The catalysed reaction is 6-carboxyhexanoyl-[ACP] + L-alanine + H(+) = (8S)-8-amino-7-oxononanoate + holo-[ACP] + CO2. Its pathway is cofactor biosynthesis; biotin biosynthesis. Functionally, catalyzes the decarboxylative condensation of pimeloyl-[acyl-carrier protein] and L-alanine to produce 8-amino-7-oxononanoate (AON), [acyl-carrier protein], and carbon dioxide. This Bacillus licheniformis (strain ATCC 14580 / DSM 13 / JCM 2505 / CCUG 7422 / NBRC 12200 / NCIMB 9375 / NCTC 10341 / NRRL NRS-1264 / Gibson 46) protein is Putative 8-amino-7-oxononanoate synthase (bioF).